The chain runs to 67 residues: Probable archaeal histone 3 (67 aa).

Interaction with DNA regions lie at residues 20-22 (RVS) and 54-57 (KTVK).

This sequence belongs to the archaeal histone HMF family. Homodimer or heterodimer with another histone. Dimers then assemble into higher oligomers, with the DNA wrapped around the protein core.

It localises to the cytoplasm. Its subcellular location is the chromosome. In terms of biological role, binds and compact DNA (95 to 150 base pairs) to form nucleosome-like structures that contain positive DNA supercoils. Increases the resistance of DNA to thermal denaturation (in vitro). The protein is Probable archaeal histone 3 of Methanocaldococcus jannaschii (strain ATCC 43067 / DSM 2661 / JAL-1 / JCM 10045 / NBRC 100440) (Methanococcus jannaschii).